We begin with the raw amino-acid sequence, 34 residues long: Potassium channel toxin alpha-KTx 6 hetlaxin (34 aa).

4 disulfide bridges follow: Cys-3–Cys-24, Cys-9–Cys-29, Cys-13–Cys-31, and Cys-19–Cys-34. At Cys-34 the chain carries Cysteine amide.

Post-translationally, contains 4 disulfide bonds. Expressed by the venom gland.

Its subcellular location is the secreted. Binds to voltage-gated potassium channels Kv1.3/KCNA3 (IC(50)=0.48 uM) and Kv1.1/KCNA1 (IC(50)=6.7 uM) and inhibits channel activity. The sequence is that of Potassium channel toxin alpha-KTx 6 hetlaxin from Heterometrus laoticus (Thai giant scorpion).